A 144-amino-acid chain; its full sequence is Endoribonuclease YbeY (144 aa).

The Zn(2+) site is built by His104, His108, and His114.

This sequence belongs to the endoribonuclease YbeY family. It depends on Zn(2+) as a cofactor.

The protein resides in the cytoplasm. Its function is as follows. Single strand-specific metallo-endoribonuclease involved in late-stage 70S ribosome quality control and in maturation of the 3' terminus of the 16S rRNA. This chain is Endoribonuclease YbeY, found in Nitratiruptor sp. (strain SB155-2).